The primary structure comprises 155 residues: Arginine repressor (155 aa).

It belongs to the ArgR family.

It is found in the cytoplasm. It participates in amino-acid biosynthesis; L-arginine biosynthesis [regulation]. In terms of biological role, regulates arginine biosynthesis genes. The protein is Arginine repressor of Mannheimia succiniciproducens (strain KCTC 0769BP / MBEL55E).